Here is a 277-residue protein sequence, read N- to C-terminus: Phosphatidylglycerol--prolipoprotein diacylglyceryl transferase (277 aa).

4 helical membrane passes run 16–36 (LGPIVIRWYALAYLAGFLFGW), 58–78 (FLTWAIVGVLLGGRLGFVLFY), 93–113 (IWSGGMSFHGGLTGIVAAILL), and 119–139 (GFSPFALGDLVAVAGPVGLFL). Residue R141 coordinates a 1,2-diacyl-sn-glycero-3-phospho-(1'-sn-glycerol). 3 helical membrane-spanning segments follow: residues 182–202 (AALEGLVLFAVLAWLASKPAV), 207–227 (GTLSGTFLVGYGIARILGEVF), and 239–259 (FGVTMGQILSVPMVLIGLWIL).

The protein belongs to the Lgt family.

It localises to the cell inner membrane. It carries out the reaction L-cysteinyl-[prolipoprotein] + a 1,2-diacyl-sn-glycero-3-phospho-(1'-sn-glycerol) = an S-1,2-diacyl-sn-glyceryl-L-cysteinyl-[prolipoprotein] + sn-glycerol 1-phosphate + H(+). Its pathway is protein modification; lipoprotein biosynthesis (diacylglyceryl transfer). Functionally, catalyzes the transfer of the diacylglyceryl group from phosphatidylglycerol to the sulfhydryl group of the N-terminal cysteine of a prolipoprotein, the first step in the formation of mature lipoproteins. This Rhodospirillum centenum (strain ATCC 51521 / SW) protein is Phosphatidylglycerol--prolipoprotein diacylglyceryl transferase.